A 275-amino-acid chain; its full sequence is NH(3)-dependent NAD(+) synthetase (275 aa).

ATP is bound at residue 46–53 (GISGGQDS). D52 contributes to the Mg(2+) binding site. Position 140 (R140) interacts with deamido-NAD(+). Residue T160 coordinates ATP. E165 provides a ligand contact to Mg(2+). Deamido-NAD(+)-binding residues include K173 and D180. ATP is bound by residues K189 and T211. 260 to 261 (HK) provides a ligand contact to deamido-NAD(+).

The protein belongs to the NAD synthetase family. In terms of assembly, homodimer.

It catalyses the reaction deamido-NAD(+) + NH4(+) + ATP = AMP + diphosphate + NAD(+) + H(+). It participates in cofactor biosynthesis; NAD(+) biosynthesis; NAD(+) from deamido-NAD(+) (ammonia route): step 1/1. Its function is as follows. Catalyzes the ATP-dependent amidation of deamido-NAD to form NAD. Uses ammonia as a nitrogen source. The sequence is that of NH(3)-dependent NAD(+) synthetase from Salmonella choleraesuis (strain SC-B67).